The sequence spans 412 residues: 23S rRNA (uracil(747)-C(5))-methyltransferase (412 aa).

Positions 63, 69, 72, and 139 each coordinate [4Fe-4S] cluster. Residues Gln255, Tyr281, Glu302, and Asp343 each contribute to the S-adenosyl-L-methionine site. Residue Cys369 is the Nucleophile of the active site.

The protein belongs to the class I-like SAM-binding methyltransferase superfamily. RNA M5U methyltransferase family.

It catalyses the reaction uridine(747) in 23S rRNA + S-adenosyl-L-methionine = 5-methyluridine(747) in 23S rRNA + S-adenosyl-L-homocysteine + H(+). Functionally, catalyzes the formation of 5-methyl-uridine at position equivalent to 747 (m5U747) in 23S rRNA. The polypeptide is 23S rRNA (uracil(747)-C(5))-methyltransferase (Pyrococcus horikoshii (strain ATCC 700860 / DSM 12428 / JCM 9974 / NBRC 100139 / OT-3)).